Consider the following 507-residue polypeptide: 2,3-bisphosphoglycerate-independent phosphoglycerate mutase (507 aa).

Mn(2+) contacts are provided by aspartate 11 and serine 61. The active-site Phosphoserine intermediate is the serine 61. Substrate-binding positions include histidine 122, 152–153 (RD), arginine 183, arginine 189, 258–261 (RNDR), and lysine 332. 5 residues coordinate Mn(2+): aspartate 399, histidine 403, aspartate 440, histidine 441, and histidine 458.

It belongs to the BPG-independent phosphoglycerate mutase family. In terms of assembly, monomer. Requires Mn(2+) as cofactor.

The enzyme catalyses (2R)-2-phosphoglycerate = (2R)-3-phosphoglycerate. The protein operates within carbohydrate degradation; glycolysis; pyruvate from D-glyceraldehyde 3-phosphate: step 3/5. In terms of biological role, catalyzes the interconversion of 2-phosphoglycerate and 3-phosphoglycerate. The polypeptide is 2,3-bisphosphoglycerate-independent phosphoglycerate mutase (Parabacteroides distasonis (strain ATCC 8503 / DSM 20701 / CIP 104284 / JCM 5825 / NCTC 11152)).